A 442-amino-acid chain; its full sequence is UPF0597 protein HRM2_02820 (442 aa).

The protein belongs to the UPF0597 family.

The sequence is that of UPF0597 protein HRM2_02820 from Desulforapulum autotrophicum (strain ATCC 43914 / DSM 3382 / VKM B-1955 / HRM2) (Desulfobacterium autotrophicum).